A 272-amino-acid chain; its full sequence is 2-dehydro-3-deoxyphosphooctonate aldolase (272 aa).

The protein belongs to the KdsA family.

It is found in the cytoplasm. It carries out the reaction D-arabinose 5-phosphate + phosphoenolpyruvate + H2O = 3-deoxy-alpha-D-manno-2-octulosonate-8-phosphate + phosphate. It functions in the pathway carbohydrate biosynthesis; 3-deoxy-D-manno-octulosonate biosynthesis; 3-deoxy-D-manno-octulosonate from D-ribulose 5-phosphate: step 2/3. The protein operates within bacterial outer membrane biogenesis; lipopolysaccharide biosynthesis. This Geotalea daltonii (strain DSM 22248 / JCM 15807 / FRC-32) (Geobacter daltonii) protein is 2-dehydro-3-deoxyphosphooctonate aldolase.